Here is a 571-residue protein sequence, read N- to C-terminus: Proline--tRNA ligase (571 aa).

It belongs to the class-II aminoacyl-tRNA synthetase family. ProS type 1 subfamily. In terms of assembly, homodimer.

Its subcellular location is the cytoplasm. It carries out the reaction tRNA(Pro) + L-proline + ATP = L-prolyl-tRNA(Pro) + AMP + diphosphate. Its function is as follows. Catalyzes the attachment of proline to tRNA(Pro) in a two-step reaction: proline is first activated by ATP to form Pro-AMP and then transferred to the acceptor end of tRNA(Pro). As ProRS can inadvertently accommodate and process non-cognate amino acids such as alanine and cysteine, to avoid such errors it has two additional distinct editing activities against alanine. One activity is designated as 'pretransfer' editing and involves the tRNA(Pro)-independent hydrolysis of activated Ala-AMP. The other activity is designated 'posttransfer' editing and involves deacylation of mischarged Ala-tRNA(Pro). The misacylated Cys-tRNA(Pro) is not edited by ProRS. This Vibrio campbellii (strain ATCC BAA-1116) protein is Proline--tRNA ligase.